Here is a 1158-residue protein sequence, read N- to C-terminus: Hephaestin (1158 aa).

The N-terminal stretch at 1-23 (MESGHLLWALLFMQSLWPQLTDG) is a signal peptide. 6 Plastocyanin-like domains span residues 24–206 (ATRV…LITC), 218–366 (QRQD…VKSC), 370–560 (PPVD…LLVC), 570–718 (KQKG…VSQC), 731–903 (AARI…LAIC), and 911–1067 (HGGR…SRTE). Residues 24-1110 (ATRVYYLGIR…PIKNVEMLAS (1087 aa)) lie on the Extracellular side of the membrane. The Na(+) site is built by Gly-70 and Tyr-73. Cu(2+) contacts are provided by His-126 and His-128. His-126 contributes to the O2 binding site. The Ca(2+) site is built by Lys-134, Asp-152, and Asp-153. Asn-164 carries an N-linked (GlcNAc...) asparagine glycan. A disulfide bond links Cys-180 and Cys-206. Cu(2+) is bound by residues His-186 and His-188. Position 186 (His-186) interacts with O2. Residue Asn-236 is glycosylated (N-linked (GlcNAc...) asparagine). Na(+) is bound at residue Ser-265. A disulfide bridge links Cys-285 with Cys-366. His-304, Cys-347, and His-352 together coordinate Cu(2+). Phe-416, Gly-425, and Tyr-428 together coordinate Na(+). Cys-534 and Cys-560 are disulfide-bonded. N-linked (GlcNAc...) asparagine glycosylation is present at Asn-588. Ser-617 is a binding site for Na(+). A disulfide bridge links Cys-637 with Cys-718. 4 residues coordinate Cu(2+): His-656, Cys-699, His-704, and Met-709. N-linked (GlcNAc...) asparagine glycans are attached at residues Asn-714 and Asn-758. Positions 769 and 778 each coordinate Na(+). 2 N-linked (GlcNAc...) asparagine glycosylation sites follow: Asn-829 and Asn-873. A disulfide bridge links Cys-877 with Cys-903. Residue Asn-931 is glycosylated (N-linked (GlcNAc...) asparagine). Cu(2+)-binding residues include His-1000, His-1003, His-1005, His-1045, Cys-1046, His-1047, His-1051, and Met-1056. O2 contacts are provided by His-1003 and His-1005. His-1047 is an O2 binding site. The chain crosses the membrane as a helical span at residues 1111–1131 (VLVAISVTLLLVVLALGGVVW). Topologically, residues 1132 to 1158 (YQHRQRKLRRNRRSILDDSFKLLSFKQ) are cytoplasmic. Phosphoserine occurs at positions 1145, 1150, and 1155.

The protein belongs to the multicopper oxidase family. As to quaternary structure, part of a complex composed of SLC40A1/ferroportin, TF/transferrin and HEPH/hephaestin that transfers iron from cells to transferrin. Requires Cu cation as cofactor. Expressed by intestinal absorptive cells (at protein level). Also detected in breast, colon, bone trabecular cells and fibroblasts.

The protein resides in the basolateral cell membrane. The catalysed reaction is 4 Fe(2+) + O2 + 4 H(+) = 4 Fe(3+) + 2 H2O. Its function is as follows. Plasma membrane ferroxidase that mediates the extracellular conversion of ferrous/Fe(2+) iron into its ferric/Fe(3+) form. Couples ferroportin which specifically exports ferrous/Fe(2+) iron from cells to transferrin that only binds and shuttles extracellular ferric/Fe(3+) iron throughout the body. By helping iron transfer from cells to blood mainly contributes to dietary iron absorption by the intestinal epithelium and more generally regulates iron levels in the body. The protein is Hephaestin of Homo sapiens (Human).